The primary structure comprises 243 residues: Carboxy-S-adenosyl-L-methionine synthase (243 aa).

S-adenosyl-L-methionine is bound by residues Y40, 65–67 (GCS), 90–91 (DN), 118–119 (DI), N133, and R200.

This sequence belongs to the class I-like SAM-binding methyltransferase superfamily. Cx-SAM synthase family. In terms of assembly, homodimer.

The enzyme catalyses prephenate + S-adenosyl-L-methionine = carboxy-S-adenosyl-L-methionine + 3-phenylpyruvate + H2O. In terms of biological role, catalyzes the conversion of S-adenosyl-L-methionine (SAM) to carboxy-S-adenosyl-L-methionine (Cx-SAM). This chain is Carboxy-S-adenosyl-L-methionine synthase, found in Shewanella piezotolerans (strain WP3 / JCM 13877).